The chain runs to 145 residues: Antimicrobial peptide NK-lysin (145 aa).

A signal peptide spans 1–22 (MTSRALLLLASALLGTPGLTFS). A propeptide spanning residues 23–62 (GLNPESYDLATAHLSDGEQFCQGLTQEDLQGDLLTERERQ) is cleaved from the precursor. One can recognise a Saposin B-type domain in the interval 62-142 (QGIACWSCRK…VDIKLCKHKA (81 aa)). Disulfide bonds link Cys-66-Cys-138, Cys-69-Cys-132, and Cys-97-Cys-107. The propeptide occupies 141-145 (KAGLI).

It is found in the secreted. In terms of biological role, may be an effector molecule of cytotoxic activity. Has antimicrobial activity. The polypeptide is Antimicrobial peptide NK-lysin (NKL) (Equus caballus (Horse)).